The following is a 151-amino-acid chain: FUN14 domain-containing protein 1 (151 aa).

The short motif at 14–17 (YEVL) is the YXXL element. Transmembrane regions (helical) follow at residues 44–64 (YSVATQIVMGGVSGWCAGFLF), 71–91 (AATAVGGGFLLLQIASHGGYI), and 130–150 (FIKKNIVVSGGFVGGFLLGLA).

This sequence belongs to the FUN14 family.

The protein localises to the mitochondrion outer membrane. Acts as an activator of hypoxia-induced mitophagy, an important mechanism for mitochondrial quality control. In Xenopus tropicalis (Western clawed frog), this protein is FUN14 domain-containing protein 1 (fundc1).